Reading from the N-terminus, the 76-residue chain is Probable insulin-like peptide alpha-type 1 (76 aa).

Residues 1–24 form the signal peptide; it reads MKTYSFFVLFIVFIFFISSSKSHS. Intrachain disulfides connect C32-C60, C44-C73, and C48-C74.

Belongs to the insulin family.

Its subcellular location is the secreted. This chain is Probable insulin-like peptide alpha-type 1 (ins-21), found in Caenorhabditis elegans.